Here is a 292-residue protein sequence, read N- to C-terminus: Ornithine decarboxylase antizyme (292 aa).

Belongs to the ODC antizyme family. In terms of assembly, interacts with ODC/SPE1 and thereby sterically blocks ODC homodimerization.

Its function is as follows. Ornithine decarboxylase (ODC) antizyme protein that negatively regulates ODC activity and intracellular polyamine biosynthesis in response to increased intracellular polyamine levels. Binds to ODC/SPE1 monomers, inhibiting the assembly of the functional ODC homodimer, and targets the monomers for ubiquitin-independent proteolytic destruction by the 26S proteasome. The sequence is that of Ornithine decarboxylase antizyme (OAZ1) from Saccharomyces cerevisiae (strain ATCC 204508 / S288c) (Baker's yeast).